Consider the following 188-residue polypeptide: Acireductone dioxygenase (188 aa).

The Fe(2+) site is built by histidine 97, histidine 99, glutamate 103, and histidine 141. Residues histidine 97, histidine 99, glutamate 103, and histidine 141 each contribute to the Ni(2+) site.

It belongs to the acireductone dioxygenase (ARD) family. Monomer. It depends on Fe(2+) as a cofactor. Ni(2+) serves as cofactor.

It carries out the reaction 1,2-dihydroxy-5-(methylsulfanyl)pent-1-en-3-one + O2 = 3-(methylsulfanyl)propanoate + CO + formate + 2 H(+). The catalysed reaction is 1,2-dihydroxy-5-(methylsulfanyl)pent-1-en-3-one + O2 = 4-methylsulfanyl-2-oxobutanoate + formate + 2 H(+). The protein operates within amino-acid biosynthesis; L-methionine biosynthesis via salvage pathway; L-methionine from S-methyl-5-thio-alpha-D-ribose 1-phosphate: step 5/6. Its function is as follows. Catalyzes 2 different reactions between oxygen and the acireductone 1,2-dihydroxy-3-keto-5-methylthiopentene (DHK-MTPene) depending upon the metal bound in the active site. Fe-containing acireductone dioxygenase (Fe-ARD) produces formate and 2-keto-4-methylthiobutyrate (KMTB), the alpha-ketoacid precursor of methionine in the methionine recycle pathway. Ni-containing acireductone dioxygenase (Ni-ARD) produces methylthiopropionate, carbon monoxide and formate, and does not lie on the methionine recycle pathway. The polypeptide is Acireductone dioxygenase (Xanthomonas oryzae pv. oryzae (strain MAFF 311018)).